The sequence spans 405 residues: Probable glucan 1,3-beta-glucosidase A (405 aa).

Positions 1–26 (MFPRISQAAILAHSLLAVCTSAATLA) are cleaved as a signal peptide. Glutamate 198 acts as the Proton donor in catalysis. 2 disulfides stabilise this stretch: cysteine 278/cysteine 403 and cysteine 304/cysteine 330. Glutamate 296 (nucleophile) is an active-site residue.

The protein belongs to the glycosyl hydrolase 5 (cellulase A) family. Monomer. Requires Mn(2+) as cofactor.

The protein localises to the secreted. The enzyme catalyses Successive hydrolysis of beta-D-glucose units from the non-reducing ends of (1-&gt;3)-beta-D-glucans, releasing alpha-glucose.. Beta-glucanases participate in the metabolism of beta-glucan, the main structural component of the cell wall. It could also function biosynthetically as a transglycosylase. This chain is Probable glucan 1,3-beta-glucosidase A (exgA), found in Emericella nidulans (strain FGSC A4 / ATCC 38163 / CBS 112.46 / NRRL 194 / M139) (Aspergillus nidulans).